Consider the following 273-residue polypeptide: 2,3,4,5-tetrahydropyridine-2,6-dicarboxylate N-succinyltransferase (273 aa).

Positions 104 and 141 each coordinate substrate.

Belongs to the transferase hexapeptide repeat family. In terms of assembly, homotrimer.

It localises to the cytoplasm. The enzyme catalyses (S)-2,3,4,5-tetrahydrodipicolinate + succinyl-CoA + H2O = (S)-2-succinylamino-6-oxoheptanedioate + CoA. It participates in amino-acid biosynthesis; L-lysine biosynthesis via DAP pathway; LL-2,6-diaminopimelate from (S)-tetrahydrodipicolinate (succinylase route): step 1/3. This is 2,3,4,5-tetrahydropyridine-2,6-dicarboxylate N-succinyltransferase from Neisseria meningitidis serogroup A / serotype 4A (strain DSM 15465 / Z2491).